The primary structure comprises 280 residues: 3,2-trans-enoyl-CoA isomerase (280 aa).

Substrate-binding positions include 68-72 (SGADF) and leucine 126. Glutamate 158 serves as the catalytic Proton donor/acceptor. The Microbody targeting signal signature appears at 278–280 (HRL).

This sequence belongs to the enoyl-CoA hydratase/isomerase family. As to quaternary structure, homohexamer, dimer of trimers. Interacts with DCI1.

The protein localises to the peroxisome. It catalyses the reaction a (3Z)-enoyl-CoA = a 4-saturated (2E)-enoyl-CoA. The catalysed reaction is a (3E)-enoyl-CoA = a 4-saturated (2E)-enoyl-CoA. Its pathway is lipid metabolism; fatty acid beta-oxidation. Its function is as follows. Essential for the beta oxidation of unsaturated fatty acids. This is 3,2-trans-enoyl-CoA isomerase (ECI1) from Saccharomyces cerevisiae (strain ATCC 204508 / S288c) (Baker's yeast).